Consider the following 182-residue polypeptide: Unknown protein 1 (182 aa).

The sequence is that of Unknown protein 1 from Helianthus annuus (Common sunflower).